We begin with the raw amino-acid sequence, 76 residues long: Putative defensin-like protein 121 (76 aa).

The signal sequence occupies residues 1–26 (MTYKATILAIFMIILVLGIGTKETRG). Disulfide bonds link cysteine 30–cysteine 74, cysteine 39–cysteine 59, cysteine 44–cysteine 68, and cysteine 48–cysteine 70.

It belongs to the DEFL family.

Its subcellular location is the secreted. This Arabidopsis thaliana (Mouse-ear cress) protein is Putative defensin-like protein 121 (LCR55).